Consider the following 324-residue polypeptide: DNA repair and recombination protein RadA (324 aa).

Residue Gly107–Ser114 participates in ATP binding.

It belongs to the eukaryotic RecA-like protein family.

Involved in DNA repair and in homologous recombination. Binds and assemble on single-stranded DNA to form a nucleoprotein filament. Hydrolyzes ATP in a ssDNA-dependent manner and promotes DNA strand exchange between homologous DNA molecules. This Methanoculleus marisnigri (strain ATCC 35101 / DSM 1498 / JR1) protein is DNA repair and recombination protein RadA.